Reading from the N-terminus, the 386-residue chain is DNA-directed RNA polymerase subunit Rpo1C (386 aa).

It belongs to the RNA polymerase beta' chain family. In terms of assembly, part of the RNA polymerase complex.

The protein resides in the cytoplasm. It catalyses the reaction RNA(n) + a ribonucleoside 5'-triphosphate = RNA(n+1) + diphosphate. DNA-dependent RNA polymerase (RNAP) catalyzes the transcription of DNA into RNA using the four ribonucleoside triphosphates as substrates. Forms part of the jaw domain. The chain is DNA-directed RNA polymerase subunit Rpo1C from Methanococcus maripaludis (strain DSM 14266 / JCM 13030 / NBRC 101832 / S2 / LL).